A 62-amino-acid polypeptide reads, in one-letter code: Large ribosomal subunit protein uL30 (62 aa).

Belongs to the universal ribosomal protein uL30 family. In terms of assembly, part of the 50S ribosomal subunit.

This is Large ribosomal subunit protein uL30 from Alkalilimnicola ehrlichii (strain ATCC BAA-1101 / DSM 17681 / MLHE-1).